The chain runs to 131 residues: Small ribosomal subunit protein uS11 (131 aa).

This sequence belongs to the universal ribosomal protein uS11 family. Part of the 30S ribosomal subunit. Interacts with proteins S7 and S18. Binds to IF-3. Interacts with VmlR. Interacts with BrxC.

Functionally, located on the platform of the 30S subunit, it bridges several disparate RNA helices of the 16S rRNA. Forms part of the Shine-Dalgarno cleft in the 70S ribosome. The chain is Small ribosomal subunit protein uS11 from Bacillus subtilis (strain 168).